Reading from the N-terminus, the 894-residue chain is Bifunctional enzyme RhaA/RhaB (894 aa).

Positions 1 to 465 are rhamnulokinase; that stretch reads MGEYRLAVDI…TAFPVTYFLP (465 aa). The L-rhamnose isomerase stretch occupies residues 466–894; that stretch reads QRSESHVSSR…KRESEKAKQR (429 aa). Mn(2+) is bound by residues H730, D762, and D764.

It in the N-terminal section; belongs to the rhamnulokinase family. In the C-terminal section; belongs to the rhamnose isomerase family. Mn(2+) is required as a cofactor.

It is found in the cytoplasm. It carries out the reaction L-rhamnulose + ATP = L-rhamnulose 1-phosphate + ADP + H(+). The catalysed reaction is L-rhamnopyranose = L-rhamnulose. It participates in carbohydrate degradation; L-rhamnose degradation; glycerone phosphate from L-rhamnose: step 1/3. Its pathway is carbohydrate degradation; L-rhamnose degradation; glycerone phosphate from L-rhamnose: step 2/3. The protein is Bifunctional enzyme RhaA/RhaB (rhaAB) of Shouchella clausii (strain KSM-K16) (Alkalihalobacillus clausii).